The primary structure comprises 155 residues: SsrA-binding protein (155 aa).

It belongs to the SmpB family.

Its subcellular location is the cytoplasm. In terms of biological role, required for rescue of stalled ribosomes mediated by trans-translation. Binds to transfer-messenger RNA (tmRNA), required for stable association of tmRNA with ribosomes. tmRNA and SmpB together mimic tRNA shape, replacing the anticodon stem-loop with SmpB. tmRNA is encoded by the ssrA gene; the 2 termini fold to resemble tRNA(Ala) and it encodes a 'tag peptide', a short internal open reading frame. During trans-translation Ala-aminoacylated tmRNA acts like a tRNA, entering the A-site of stalled ribosomes, displacing the stalled mRNA. The ribosome then switches to translate the ORF on the tmRNA; the nascent peptide is terminated with the 'tag peptide' encoded by the tmRNA and targeted for degradation. The ribosome is freed to recommence translation, which seems to be the essential function of trans-translation. The protein is SsrA-binding protein of Gloeothece citriformis (strain PCC 7424) (Cyanothece sp. (strain PCC 7424)).